The chain runs to 373 residues: MPKRFLAPVTEQIYTLNLGPQHPSTHGVLRVLLDLDGEFIVKADPVIGYGHRGHEKMGENRLFKQFLPNTSRLDYLSGFLFNHGYVLAVEKLAGIPVPPRAQFIRTICSEFNRIASHLLWFGTYVMDLGGFTPFLYAFDDRERILDILDWVTGSRLTYSYCRFGGVDRDIDTRFTDMARDFIKRLRSRWPDYHNLVTRNIIFIHRTRGVGVITPEQARQFGVTGPNLRACGIAFDTRKAEPYEVYDQFDFEIPVGSDGDALDRYRVRFEEMEQSLRIIEQALDRLPGGPFMNDSVPTRLKPPKGEVYFAFESARGQAAYYLVSDGTPSPYRCHIRVPSFGNLHVLTEVLRGTLVADAISILGSVDLVIPEIDR.

Belongs to the complex I 49 kDa subunit family. NDH-1 is composed of 14 different subunits. Subunits NuoB, C, D, E, F, and G constitute the peripheral sector of the complex.

The protein resides in the cell inner membrane. It catalyses the reaction a quinone + NADH + 5 H(+)(in) = a quinol + NAD(+) + 4 H(+)(out). Functionally, NDH-1 shuttles electrons from NADH, via FMN and iron-sulfur (Fe-S) centers, to quinones in the respiratory chain. The immediate electron acceptor for the enzyme in this species is believed to be ubiquinone. Couples the redox reaction to proton translocation (for every two electrons transferred, four hydrogen ions are translocated across the cytoplasmic membrane), and thus conserves the redox energy in a proton gradient. In Syntrophobacter fumaroxidans (strain DSM 10017 / MPOB), this protein is NADH-quinone oxidoreductase subunit D.